Reading from the N-terminus, the 395-residue chain is Vibriobactin-specific isochorismate synthase (395 aa).

Belongs to the isochorismate synthase family.

The enzyme catalyses chorismate = isochorismate. The protein operates within siderophore biosynthesis; vibriobactin biosynthesis. The polypeptide is Vibriobactin-specific isochorismate synthase (vibC) (Vibrio cholerae serotype O1 (strain ATCC 39315 / El Tor Inaba N16961)).